Here is a 700-residue protein sequence, read N- to C-terminus: Calpain-2 catalytic subunit (700 aa).

Residues 2-19 (AGMAAALAKERAAAAGAG) constitute a propeptide, anchors to the small subunit. The region spanning 45–344 (LFHDPSFPAG…YSRLEICNLT (300 aa)) is the Calpain catalytic domain. Ca(2+)-binding residues include Gly91 and Asp96. The active site involves Cys105. 3 residues coordinate Ca(2+): Glu175, Gln229, and Lys230. Residues His262 and Asn286 contribute to the active site. Ca(2+)-binding residues include Glu292, Asp299, and Glu323. The domain III stretch occupies residues 345–514 (PDTLASDRYK…KNANSTVIDD (170 aa)). Residues 515–529 (EIEANFEETEIDEDD) form a linker region. The tract at residues 530 to 700 (IEPSFKKLFG…LINWLFFTVI (171 aa)) is domain IV. Ca(2+) is bound by residues Ala542, Asp545, Glu547, Glu552, Asp585, Asp587, Ser589, Lys591, Glu596, Asp615, Asp617, Ser619, Thr621, Glu626, Asp658, and Asn661. 2 EF-hand domains span residues 572-605 (FSIE…TKIQ) and 602-637 (TKIQ…AGFK). Residues 667-700 (IRLETLYKMFRKLDTEKTGTIELNLINWLFFTVI) enclose the EF-hand 3 domain.

It belongs to the peptidase C2 family. In terms of assembly, forms a heterodimer with a small (regulatory) subunit (CAPNS1). Requires Ca(2+) as cofactor. Ubiquitous.

The protein resides in the cytoplasm. It is found in the cell membrane. It carries out the reaction Broad endopeptidase specificity.. Activated by 200-1000 micromolar concentrations of calcium and inhibited by calpastatin. Calcium-regulated non-lysosomal thiol-protease which catalyze limited proteolysis of substrates involved in cytoskeletal remodeling and signal transduction. The polypeptide is Calpain-2 catalytic subunit (CAPN2) (Gallus gallus (Chicken)).